A 194-amino-acid polypeptide reads, in one-letter code: NADH-quinone oxidoreductase subunit B (194 aa).

Pro residues predominate over residues 1–11 (MGVIATPPPSV). Residues 1–24 (MGVIATPPPSVQGPSSQVPSSAPI) form a disordered region. Low complexity predominate over residues 12–21 (QGPSSQVPSS). Positions 72, 73, 137, and 167 each coordinate [4Fe-4S] cluster.

The protein belongs to the complex I 20 kDa subunit family. In terms of assembly, NDH-1 is composed of 14 different subunits. Subunits NuoB, C, D, E, F, and G constitute the peripheral sector of the complex. [4Fe-4S] cluster serves as cofactor.

The protein localises to the cell inner membrane. It catalyses the reaction a quinone + NADH + 5 H(+)(in) = a quinol + NAD(+) + 4 H(+)(out). NDH-1 shuttles electrons from NADH, via FMN and iron-sulfur (Fe-S) centers, to quinones in the respiratory chain. The immediate electron acceptor for the enzyme in this species is believed to be ubiquinone. Couples the redox reaction to proton translocation (for every two electrons transferred, four hydrogen ions are translocated across the cytoplasmic membrane), and thus conserves the redox energy in a proton gradient. This Rhodospirillum centenum (strain ATCC 51521 / SW) protein is NADH-quinone oxidoreductase subunit B.